A 139-amino-acid polypeptide reads, in one-letter code: Large ribosomal subunit protein bL20 (139 aa).

It belongs to the bacterial ribosomal protein bL20 family.

Its function is as follows. Binds directly to 23S ribosomal RNA and is necessary for the in vitro assembly process of the 50S ribosomal subunit. It is not involved in the protein synthesizing functions of that subunit. The chain is Large ribosomal subunit protein bL20 from Leuconostoc mesenteroides subsp. mesenteroides (strain ATCC 8293 / DSM 20343 / BCRC 11652 / CCM 1803 / JCM 6124 / NCDO 523 / NBRC 100496 / NCIMB 8023 / NCTC 12954 / NRRL B-1118 / 37Y).